The chain runs to 91 residues: MPRSLKKGPFIDLHLLKKVEVAVEKNDRKPIKTWSRRSMILPHMVGLTIAVHNGRQHVPVLVNEDMVGHKLGEFAATRTYRGHAADKKAKR.

The protein belongs to the universal ribosomal protein uS19 family.

In terms of biological role, protein S19 forms a complex with S13 that binds strongly to the 16S ribosomal RNA. The polypeptide is Small ribosomal subunit protein uS19 (Pseudomonas paraeruginosa (strain DSM 24068 / PA7) (Pseudomonas aeruginosa (strain PA7))).